A 212-amino-acid chain; its full sequence is Outer-membrane lipoprotein carrier protein (212 aa).

Positions 1-29 (MSSARRRALGFSFQALLLCAAGWHGAAQA) are cleaved as a signal peptide.

It belongs to the LolA family. Monomer.

It localises to the periplasm. Participates in the translocation of lipoproteins from the inner membrane to the outer membrane. Only forms a complex with a lipoprotein if the residue after the N-terminal Cys is not an aspartate (The Asp acts as a targeting signal to indicate that the lipoprotein should stay in the inner membrane). The protein is Outer-membrane lipoprotein carrier protein of Leptothrix cholodnii (strain ATCC 51168 / LMG 8142 / SP-6) (Leptothrix discophora (strain SP-6)).